Here is an 85-residue protein sequence, read N- to C-terminus: U4-theraphotoxin-Hhn1c (85 aa).

An N-terminal signal peptide occupies residues 1 to 22 (MKVTLIAIVTCAAVLVLHTTAA). Residues 23-48 (EELEAESQLMEVGMPDTELAAVDEER) constitute a propeptide that is removed on maturation. 3 disulfide bridges follow: cysteine 52–cysteine 66, cysteine 56–cysteine 77, and cysteine 71–cysteine 82.

This sequence belongs to the neurotoxin 12 (Hwtx-2) family. 02 (Hwtx-2) subfamily. Expressed by the venom gland.

The protein localises to the secreted. In terms of biological role, postsynaptic neurotoxin. The sequence is that of U4-theraphotoxin-Hhn1c from Cyriopagopus hainanus (Chinese bird spider).